We begin with the raw amino-acid sequence, 120 residues long: uncharacterized protein (120 aa).

Residues serine 90–arginine 120 form a disordered region.

This is an uncharacterized protein from Homo sapiens (Human).